The primary structure comprises 435 residues: Galactose/lactose metabolism regulatory protein GAL80 (435 aa).

The residue at position 1 (Met1) is an N-acetylmethionine.

The protein to K.lactis GAL80. In terms of assembly, monomer.

Its function is as follows. This protein is a negative regulator for the gene expression of the lactose/galactose metabolic genes. It binds to GAL4 and so blocks transcriptional activation by it, in the absence of an inducing sugar. In Saccharomyces cerevisiae (strain ATCC 204508 / S288c) (Baker's yeast), this protein is Galactose/lactose metabolism regulatory protein GAL80 (GAL80).